We begin with the raw amino-acid sequence, 242 residues long: Protein LST7 (242 aa).

The uDENN FLCN/SMCR8-type domain maps to 48 to 212 (SCLLQFPEES…NKSKFGRNLV (165 aa)).

In terms of biological role, required for the nitrogen-regulated transport of amino acid permeases GAP1 and PUT4 from the Golgi to the cell surface. This chain is Protein LST7 (LST7), found in Saccharomyces cerevisiae (strain ATCC 204508 / S288c) (Baker's yeast).